A 97-amino-acid chain; its full sequence is Putative CC-type chemokine U83 (97 aa).

Cystine bridges form between Cys-32–Cys-62 and Cys-33–Cys-76.

The protein belongs to the intercrine beta (chemokine CC) family. Highly divergent.

The chain is Putative CC-type chemokine U83 (U83) from Human herpesvirus 6A (strain Uganda-1102) (HHV-6 variant A).